A 1521-amino-acid polypeptide reads, in one-letter code: Suppressor of Ty 6 homolog (1521 aa).

Residues 1 to 204 are disordered; that stretch reads MDFIDNQAEE…EGAEDDARDV (204 aa). The segment covering 26–41 has biased composition (basic residues); that stretch reads KKMKMAKDKLKKKKKV. A Nuclear localization signal motif is present at residues 26-42; it reads KKMKMAKDKLKKKKKVV. Acidic residues-rich tracts occupy residues 45 to 56 and 67 to 76; these read SDEDEDDEDDEE and ADEDDEEEDA. Basic and acidic residues predominate over residues 77 to 89; that stretch reads RSEKSDRSRRSEI. Over residues 90-103 the composition is skewed to acidic residues; sequence NDELDDEDLDLIDE. Residues 127-149 are compositionally biased toward basic and acidic residues; it reads PIRRSNQDDDDLQSERGSDDGDK. The span at 167–177 shows a compositional bias: acidic residues; sequence RSEDDFIEDDG. One can recognise an S1 motif domain in the interval 1182–1251; that stretch reads LNAGRPGGCV…EKFSILLSCK (70 aa). One can recognise an SH2 domain in the interval 1299-1388; the sequence is HPNFHNVSYE…IARFVLPMIQ (90 aa). Residues 1490–1521 form a disordered region; it reads GIRSSLSYRPTGRTGPPPSAPYQQPPQQQYYR. Over residues 1504 to 1513 the composition is skewed to pro residues; that stretch reads GPPPSAPYQQ.

This sequence belongs to the SPT6 family. Interacts with glp-1 and lin-12.

It is found in the nucleus. In terms of biological role, histone H3-H4 chaperone that plays a role in maintenance of chromatin structure during RNA polymerase II transcription elongation. May be required for several aspects of morphogenesis of C.briggsae, including regulation of division in the germline and gut and specification of ventral-uterine precursor cell fate. This is Suppressor of Ty 6 homolog (emb-5) from Caenorhabditis briggsae.